A 376-amino-acid chain; its full sequence is Lactosylceramide 1,3-N-acetyl-beta-D-glucosaminyltransferase (376 aa).

Over 1-13 the chain is Cytoplasmic; it reads MRLFVSRRVKRWK. The helical; Signal-anchor for type II membrane protein transmembrane segment at 14 to 34 threads the bilayer; it reads IFHFFVTCFILSFMVFWSPIN. The Lumenal portion of the chain corresponds to 35–376; that stretch reads NYIMSHMKSY…NSYPCWAAFA (342 aa). N-linked (GlcNAc...) asparagine glycosylation occurs at Asn-57.

This sequence belongs to the glycosyltransferase 31 family. As to expression, highly expressed in adult spleen, placenta and cerebellar Purkinje cells where it colocalizes with HNK-1. Expressed at lower level in brain, lung, thymus and muscle.

Its subcellular location is the golgi apparatus membrane. The catalysed reaction is a beta-D-Gal-(1-&gt;4)-beta-D-Glc-(1&lt;-&gt;1)-Cer(d18:1(4E)) + UDP-N-acetyl-alpha-D-glucosamine = a beta-D-GlcNAc-(1-&gt;3)-beta-D-Gal-(1-&gt;4)-beta-D-Glc-(1&lt;-&gt;1)-Cer(d18:1(4E)) + UDP + H(+). It carries out the reaction a neolactoside nLc4Cer(d18:1(4E)) + UDP-N-acetyl-alpha-D-glucosamine = a neolactoside IV(3)-beta-GlcNAc-nLc4Cer(d18:1(4E)) + UDP + H(+). It functions in the pathway protein modification; protein glycosylation. Functionally, beta-1,3-N-acetylglucosaminyltransferase that plays a key role in the synthesis of lacto- or neolacto-series carbohydrate chains on glycolipids, notably by participating in biosynthesis of HNK-1 and Lewis X carbohydrate structures. Has strong activity toward lactosylceramide (LacCer) and neolactotetraosylceramide (nLc(4)Cer; paragloboside), resulting in the synthesis of Lc(3)Cer and neolactopentaosylceramide (nLc(5)Cer), respectively. Plays a central role in regulating neolacto-series glycolipid synthesis during embryonic development. The polypeptide is Lactosylceramide 1,3-N-acetyl-beta-D-glucosaminyltransferase (Mus musculus (Mouse)).